We begin with the raw amino-acid sequence, 508 residues long: Argininosuccinate lyase (508 aa).

It belongs to the lyase 1 family. Argininosuccinate lyase subfamily.

The protein resides in the cytoplasm. The enzyme catalyses 2-(N(omega)-L-arginino)succinate = fumarate + L-arginine. The protein operates within amino-acid biosynthesis; L-arginine biosynthesis; L-arginine from L-ornithine and carbamoyl phosphate: step 3/3. This chain is Argininosuccinate lyase, found in Methanopyrus kandleri (strain AV19 / DSM 6324 / JCM 9639 / NBRC 100938).